We begin with the raw amino-acid sequence, 113 residues long: U11-theraphotoxin-Hhn1r (113 aa).

The N-terminal stretch at 1-21 (MNTVRVTFLLVFVLAVSLGQA) is a signal peptide. The propeptide occupies 22–74 (DKDENRMEMQEKTEQGKSYLDFAENLLLQKLEELEAKLLEEDSEESRNSRQKR). The disordered stretch occupies residues 61–83 (EEDSEESRNSRQKRCIGEGVPCD). 3 cysteine pairs are disulfide-bonded: Cys-75–Cys-90, Cys-82–Cys-95, and Cys-89–Cys-110.

It belongs to the neurotoxin 14 (magi-1) family. 01 (HNTX-16) subfamily. As to expression, expressed by the venom gland.

It is found in the secreted. Its function is as follows. Probable ion channel inhibitor. This chain is U11-theraphotoxin-Hhn1r, found in Cyriopagopus hainanus (Chinese bird spider).